Here is a 289-residue protein sequence, read N- to C-terminus: 4-diphosphocytidyl-2-C-methyl-D-erythritol kinase (289 aa).

The active site involves K10. Position 94–104 (94–104 (PVAAGLAGGSS)) interacts with ATP. The active site involves D136.

It belongs to the GHMP kinase family. IspE subfamily.

It carries out the reaction 4-CDP-2-C-methyl-D-erythritol + ATP = 4-CDP-2-C-methyl-D-erythritol 2-phosphate + ADP + H(+). The protein operates within isoprenoid biosynthesis; isopentenyl diphosphate biosynthesis via DXP pathway; isopentenyl diphosphate from 1-deoxy-D-xylulose 5-phosphate: step 3/6. In terms of biological role, catalyzes the phosphorylation of the position 2 hydroxy group of 4-diphosphocytidyl-2C-methyl-D-erythritol. The polypeptide is 4-diphosphocytidyl-2-C-methyl-D-erythritol kinase (Bacillus mycoides (strain KBAB4) (Bacillus weihenstephanensis)).